The chain runs to 459 residues: Probable ECA polymerase (459 aa).

11 consecutive transmembrane segments (helical) span residues 3-23 (LTQF…ILTL), 37-57 (IFFS…TCLL), 65-85 (VVPV…YGIY), 119-139 (LASV…FLLF), 154-174 (GVAL…VYFL), 181-201 (WLFF…VVGG), 206-226 (IIIA…ITLW), 227-247 (MLVT…LKRY), 340-360 (LVVM…GLII), 377-397 (YKAA…IVLA), and 409-429 (VFFC…YWLF).

The protein belongs to the WzyE family. Probably part of a complex composed of WzxE, WzyE and WzzE.

The protein resides in the cell inner membrane. It functions in the pathway bacterial outer membrane biogenesis; enterobacterial common antigen biosynthesis. Probably involved in the polymerization of enterobacterial common antigen (ECA) trisaccharide repeat units. This is Probable ECA polymerase from Photorhabdus laumondii subsp. laumondii (strain DSM 15139 / CIP 105565 / TT01) (Photorhabdus luminescens subsp. laumondii).